Here is a 203-residue protein sequence, read N- to C-terminus: Glycerol-3-phosphate acyltransferase (203 aa).

The next 5 membrane-spanning stretches (helical) occupy residues 10–30 (LLALVGLAAYLLGAIPFGLLI), 59–79 (PAAAATLILDAGKGAFAVILA), 87–107 (AAQIAGAAAFLGHCFPVYLKF), 116–136 (FFGTVIALSWPLGLAAGAIWL), and 168–188 (LVVLSLFLGFLIWIRHRENII).

This sequence belongs to the PlsY family. As to quaternary structure, probably interacts with PlsX.

It is found in the cell inner membrane. It catalyses the reaction an acyl phosphate + sn-glycerol 3-phosphate = a 1-acyl-sn-glycero-3-phosphate + phosphate. It functions in the pathway lipid metabolism; phospholipid metabolism. Its function is as follows. Catalyzes the transfer of an acyl group from acyl-phosphate (acyl-PO(4)) to glycerol-3-phosphate (G3P) to form lysophosphatidic acid (LPA). This enzyme utilizes acyl-phosphate as fatty acyl donor, but not acyl-CoA or acyl-ACP. The sequence is that of Glycerol-3-phosphate acyltransferase from Dinoroseobacter shibae (strain DSM 16493 / NCIMB 14021 / DFL 12).